The following is a 551-amino-acid chain: Cytosolic Fe-S cluster assembly factor NAR1 (551 aa).

6 residues coordinate [4Fe-4S] cluster: cysteine 20, cysteine 57, cysteine 60, cysteine 63, cysteine 178, and cysteine 242. The segment at 395-435 (DPSGHKKRSVRRVAALRSRGRKDSSSEDSTGTPSAISNALG) is disordered. The segment covering 421-431 (EDSTGTPSAIS) has biased composition (polar residues). Residue cysteine 451 participates in [4Fe-4S] cluster binding.

This sequence belongs to the NARF family.

Functionally, component of the cytosolic Fe/S protein assembly machinery. Required for maturation of extramitochondrial Fe/S proteins. May play a role in the transfer of pre-assembled Fe/S clusters to target apoproteins. This is Cytosolic Fe-S cluster assembly factor NAR1 (NAR1) from Candida glabrata (strain ATCC 2001 / BCRC 20586 / JCM 3761 / NBRC 0622 / NRRL Y-65 / CBS 138) (Yeast).